We begin with the raw amino-acid sequence, 613 residues long: Probable indole-3-acetic acid-amido synthetase GH3.12 (613 aa).

The protein belongs to the IAA-amido conjugating enzyme family. As to expression, expressed in roots.

In terms of biological role, may catalyze the synthesis of indole-3-acetic acid (IAA)-amino acid conjugates, providing a mechanism for the plant to cope with the presence of excess auxin. This is Probable indole-3-acetic acid-amido synthetase GH3.12 (GH3.12) from Oryza sativa subsp. japonica (Rice).